The following is a 293-amino-acid chain: Protease HtpX homolog (293 aa).

2 helical membrane passes run 5-25 (IFLF…TLRL) and 43-63 (ALLV…LAMS). Residue H148 participates in Zn(2+) binding. E149 is an active-site residue. H152 lines the Zn(2+) pocket. 2 helical membrane-spanning segments follow: residues 159-179 (VTLA…SRII) and 199-219 (FVTS…IVMW). Zn(2+) is bound at residue E225.

The protein belongs to the peptidase M48B family. Zn(2+) serves as cofactor.

The protein localises to the cell inner membrane. The protein is Protease HtpX homolog of Nitrosomonas europaea (strain ATCC 19718 / CIP 103999 / KCTC 2705 / NBRC 14298).